Consider the following 439-residue polypeptide: MFDLPRAAPLDMADSWLTFQAEEEQGQESFSSSVNLDDSLTSLQWLQEFSILNSNEGKTPSSSGDSHGYRQLSGAPCSPLAADPACLGMPHTPGKPISSSTSRASHLGLQPMEEIDYKTNPHVKPPYSYATLICMAMQASKKTKITLSAIYNWITDNFCYFRHADPTWQNSIRHNLSLNKCFMKVPREKDEPGKGGFWKIDPQYADRLINGAMKKRRLPPVQIHPAFASAQAAASSDSKRGSAWQMSVNSESHQLLKAFEEITNEQGWNPLGEHGWNSISDGKSHKRKQPLPKRMFKAPRLSSSPMLSQEEQTELGSLKGDFDWEVIFDSSINGFNFSAFEDLEVTPPLSPVTRSVDLTVHGKHIDCPQQWYPMGQDHAVAQNSLDFDETLLATSFLQHPWEENRNDYLSNSANIEQLFDLNEAFPAELNDWSSLGSYI.

A DNA-binding region (fork-head) is located at residues 124-218; it reads KPPYSYATLI…INGAMKKRRL (95 aa). The disordered stretch occupies residues 273–293; that stretch reads EHGWNSISDGKSHKRKQPLPK. Basic residues predominate over residues 284–293; the sequence is SHKRKQPLPK.

It belongs to the FOXJ1 family. Expressed in two independent areas of stage 10-11 embryos; in the dorsal blastopore lip (Spemann organizer) and shortly after in the ectodermal cells of the animal cap. As development proceeds, cells of the animal cap contribute to the epidermis and show a spotty pattern, which suggests expression in ciliated epidermal cells. Distribution of these cells is uniform in the trunk area of the embryo but more random in the head, being practically absent in the cement gland and olfactory placode. The spotted pattern becomes more dispersed as embryos grow in size. Due to cell movements during gastrulation, expression in the dorsal lip becomes located in the dorsal midline with expression restricted to the neuroectoderm. Expressed transiently in cells of the newly formed neural floor plate in the tail of older tadpoles.

It is found in the nucleus. Key transcription factor required for motile ciliogenesis. Activates genes essential for motile cilia formation and function. Required for ciliogenesis in multiciliated cells. The protein is Forkhead box protein J1-A (foxj1-a) of Xenopus laevis (African clawed frog).